The chain runs to 470 residues: ATP synthase subunit beta (470 aa).

Position 156–163 (glycine 156–threonine 163) interacts with ATP.

It belongs to the ATPase alpha/beta chains family. F-type ATPases have 2 components, CF(1) - the catalytic core - and CF(0) - the membrane proton channel. CF(1) has five subunits: alpha(3), beta(3), gamma(1), delta(1), epsilon(1). CF(0) has three main subunits: a(1), b(2) and c(9-12). The alpha and beta chains form an alternating ring which encloses part of the gamma chain. CF(1) is attached to CF(0) by a central stalk formed by the gamma and epsilon chains, while a peripheral stalk is formed by the delta and b chains.

Its subcellular location is the cell inner membrane. The enzyme catalyses ATP + H2O + 4 H(+)(in) = ADP + phosphate + 5 H(+)(out). Produces ATP from ADP in the presence of a proton gradient across the membrane. The catalytic sites are hosted primarily by the beta subunits. In Nitratidesulfovibrio vulgaris (strain ATCC 29579 / DSM 644 / CCUG 34227 / NCIMB 8303 / VKM B-1760 / Hildenborough) (Desulfovibrio vulgaris), this protein is ATP synthase subunit beta.